Reading from the N-terminus, the 113-residue chain is MAIWGSSSSNTASSGEADIKTHLMNQVRQEAAVTNARNLIGKVNEHCFEACIPNPGTSLSSAEHTCLSQCMEKYISFWNAVSRGYIARLANERKAYGGGALDASFVQSGESSL.

A Twin CX3C motif motif is present at residues 47-70; sequence CFEACIPNPGTSLSSAEHTCLSQC. 2 cysteine pairs are disulfide-bonded: Cys-47–Cys-70 and Cys-51–Cys-66.

This sequence belongs to the small Tim family. In terms of assembly, heterohexamer; composed of 3 copies of TIM8 and 3 copies of TIM13, named soluble 70 kDa complex. Associates with the TIM22 complex, whose core is composed of TIM22 and TIM54. Interacts with the transmembrane regions of multi-pass transmembrane proteins in transit.

The protein resides in the mitochondrion inner membrane. Functionally, mitochondrial intermembrane chaperone that participates in the import and insertion of some multi-pass transmembrane proteins into the mitochondrial inner membrane. Also required for the transfer of beta-barrel precursors from the TOM complex to the sorting and assembly machinery (SAM complex) of the outer membrane. Acts as a chaperone-like protein that protects the hydrophobic precursors from aggregation and guide them through the mitochondrial intermembrane space. The TIM8-TIM13 complex is non essential and only mediates the import of few proteins, while the predominant TIM9-TIM10 70 kDa complex is crucial and mediates the import of much more proteins. In Aspergillus fumigatus (strain ATCC MYA-4609 / CBS 101355 / FGSC A1100 / Af293) (Neosartorya fumigata), this protein is Mitochondrial import inner membrane translocase subunit tim13 (tim13).